A 58-amino-acid polypeptide reads, in one-letter code: uncharacterized protein (58 aa).

This is an uncharacterized protein from Phaseolus vulgaris (Kidney bean).